A 270-amino-acid polypeptide reads, in one-letter code: Diaminopimelate epimerase (270 aa).

Substrate contacts are provided by Asn15, Gln49, and Asn66. Catalysis depends on Cys75, which acts as the Proton donor. Substrate-binding positions include 76 to 77, Asn155, Asn187, and 204 to 205; these read GN and ER. Cys213 functions as the Proton acceptor in the catalytic mechanism. Position 214-215 (214-215) interacts with substrate; the sequence is GS.

This sequence belongs to the diaminopimelate epimerase family. Homodimer.

It is found in the cytoplasm. It catalyses the reaction (2S,6S)-2,6-diaminopimelate = meso-2,6-diaminopimelate. Its pathway is amino-acid biosynthesis; L-lysine biosynthesis via DAP pathway; DL-2,6-diaminopimelate from LL-2,6-diaminopimelate: step 1/1. Functionally, catalyzes the stereoinversion of LL-2,6-diaminopimelate (L,L-DAP) to meso-diaminopimelate (meso-DAP), a precursor of L-lysine and an essential component of the bacterial peptidoglycan. In Rickettsia massiliae (strain Mtu5), this protein is Diaminopimelate epimerase.